Here is a 286-residue protein sequence, read N- to C-terminus: ATP synthase gamma chain (286 aa).

This sequence belongs to the ATPase gamma chain family. F-type ATPases have 2 components, CF(1) - the catalytic core - and CF(0) - the membrane proton channel. CF(1) has five subunits: alpha(3), beta(3), gamma(1), delta(1), epsilon(1). CF(0) has three main subunits: a, b and c.

It is found in the cell membrane. In terms of biological role, produces ATP from ADP in the presence of a proton gradient across the membrane. The gamma chain is believed to be important in regulating ATPase activity and the flow of protons through the CF(0) complex. The protein is ATP synthase gamma chain of Ureaplasma urealyticum serovar 10 (strain ATCC 33699 / Western).